A 723-amino-acid polypeptide reads, in one-letter code: Threonine--tRNA ligase, mitochondrial (723 aa).

Ser57 is subject to Phosphoserine. Positions 64–126 (RAIKISLPEG…ETDCHLRFLT (63 aa)) constitute a TGS domain.

It belongs to the class-II aminoacyl-tRNA synthetase family. In terms of assembly, homodimer.

It localises to the mitochondrion matrix. It carries out the reaction tRNA(Thr) + L-threonine + ATP = L-threonyl-tRNA(Thr) + AMP + diphosphate + H(+). Its function is as follows. Catalyzes the attachment of threonine to tRNA(Thr) in a two-step reaction: threonine is first activated by ATP to form Thr-AMP and then transferred to the acceptor end of tRNA(Thr). Also edits incorrectly charged tRNA(Thr) via its editing domain. The protein is Threonine--tRNA ligase, mitochondrial (Tars2) of Mus musculus (Mouse).